The sequence spans 141 residues: MSANNMRLLCLLLACYISAIVAHRPSYRSSGSDRYVDVVRASETAEAQAAALTNAAGAAASAAKLDGADWYALNRYGWEQGRPLLAKPYGPLDNLYAAALPPRSFVAEIDPVFKKSHYGGAYGGKSVTLNTGAKVAVAALN.

The signal sequence occupies residues 1–22 (MSANNMRLLCLLLACYISAIVA).

It belongs to the chorion protein S16 family.

It localises to the secreted. Chorion membrane (egg shell) protein; plays a role in protecting the egg from the environment. The chain is Chorion protein S16 (Cp16) from Drosophila subobscura (Fruit fly).